A 417-amino-acid polypeptide reads, in one-letter code: Solanesyl diphosphate synthase 2, chloroplastic (417 aa).

Residues Met1–Arg60 constitute a chloroplast transit peptide. Residues Lys137, Arg140, and His175 each coordinate isopentenyl diphosphate. Mg(2+) contacts are provided by Asp182 and Asp186. Arg191 contributes to the an all-trans-polyprenyl diphosphate binding site. Arg192 lines the isopentenyl diphosphate pocket. Residues Lys268, Thr269, Gln306, and Lys323 each coordinate an all-trans-polyprenyl diphosphate.

This sequence belongs to the FPP/GGPP synthase family. In terms of assembly, homodimer. Interacts with FBN5. The cofactor is Mg(2+). As to expression, higher expression in leaves than in roots.

Its subcellular location is the plastid. It localises to the chloroplast. The enzyme catalyses 5 isopentenyl diphosphate + (2E,6E,10E)-geranylgeranyl diphosphate = all-trans-nonaprenyl diphosphate + 5 diphosphate. Its function is as follows. Involved in providing solanesyl diphosphate for plastoquinone-9 (PQ-9) formation in plastids. Catalyzes the elongation of the prenyl side chain of PQ-9 in plastids. Contributes to the biosynthesis of plastochromanol-8 (PC-8) in plastids. Does not contribute to the synthesis of tocopherol or ubiquinone. PQ-9 and PC-8 are lipophilic antioxidants that act as protectant against photooxidative stress under high light stress conditions. Prefers geranylgeranyl diphosphate to farnesyl diphosphate as substrate. No activity with geranyl diphosphate or dimethylallyl diphosphate as substrate. This chain is Solanesyl diphosphate synthase 2, chloroplastic, found in Arabidopsis thaliana (Mouse-ear cress).